A 246-amino-acid polypeptide reads, in one-letter code: Sensory transduction protein LytT (246 aa).

A Response regulatory domain is found at 4-120 (HIMIAEDERL…RFKIAMNRIR (117 aa)). Aspartate 55 is subject to 4-aspartylphosphate. The region spanning 136–243 (LVVNLDEKMM…AKGLFDALQG (108 aa)) is the HTH LytTR-type domain.

Post-translationally, phosphorylated by LytS.

Its subcellular location is the cytoplasm. In terms of biological role, member of the two-component regulatory system LytS/LytT that probably regulates genes involved in cell wall metabolism. In Oceanobacillus iheyensis (strain DSM 14371 / CIP 107618 / JCM 11309 / KCTC 3954 / HTE831), this protein is Sensory transduction protein LytT (lytT).